Here is a 207-residue protein sequence, read N- to C-terminus: Outer-membrane lipoprotein LolB (207 aa).

The signal sequence occupies residues 1-21; sequence MTLPDFRLIRLLPLASLVLTA. A lipid anchor (N-palmitoyl cysteine) is attached at Cys22. Residue Cys22 is the site of S-diacylglycerol cysteine attachment.

Belongs to the LolB family. In terms of assembly, monomer.

The protein localises to the cell outer membrane. Functionally, plays a critical role in the incorporation of lipoproteins in the outer membrane after they are released by the LolA protein. The sequence is that of Outer-membrane lipoprotein LolB from Salmonella typhi.